The primary structure comprises 378 residues: Fructose-1,6-bisphosphatase class 1 2 (378 aa).

Glutamate 98, aspartate 120, leucine 122, and aspartate 123 together coordinate Mg(2+). Residues 123 to 126 and asparagine 227 each bind substrate; that span reads DGSS. A Mg(2+)-binding site is contributed by glutamate 299.

The protein belongs to the FBPase class 1 family. In terms of assembly, homotetramer. The cofactor is Mg(2+).

The protein resides in the cytoplasm. It catalyses the reaction beta-D-fructose 1,6-bisphosphate + H2O = beta-D-fructose 6-phosphate + phosphate. The protein operates within carbohydrate biosynthesis; gluconeogenesis. The sequence is that of Fructose-1,6-bisphosphatase class 1 2 from Paraburkholderia xenovorans (strain LB400).